Reading from the N-terminus, the 486-residue chain is MVSEIKTLVTFFGGTGDLAKRKLYPSVFNLYKKGYLQKHFAIVGTARQALNDDEFKQLVRDSIKDFTDDQAQAEAFIEHFSYRAHDVTDAASYAVLKEAIEEAADKFDIDGNRIFYMSVAPRFFGTIAKYLKSEGLLADTGYNRLMIEKPFGTSYDTAAELQNDLENAFDDNQLFRIDHYLGKEMVQNIAALRFGNPIFDAAWNKDYIKNVQVTLSEVLGVEERAGYYDTAGALLDMIQNHTMQIVGWLAMEKPESFTDKDIRAAKNAAFNALKIYDEAEVNKYFVRAQYGAGDSADFKPYLEELDVPADSKNNTFIAGELQFDLPRWEGVPFYVRSGKRLAAKQTRVDIVFKAGTFNFGSEQEAQEAVLSIIIDPKGAIELKLNAKSVEDAFNTRTIDLGWTVSDEDKKNTPEPYERMIHDTMNGDGSNFADWNGVSIAWKFVDAISAVYTADKAPLETYKSGSMGPEASDKLLAANGDAWVFKG.

Residues 13-20 (GGTGDLAK), Arg47, 86-87 (DV), and Lys149 contribute to the NADP(+) site. Residues His179, Lys183, Glu217, and Asp236 each coordinate substrate. His241 (proton acceptor) is an active-site residue. Lys339 and Lys344 together coordinate substrate.

This sequence belongs to the glucose-6-phosphate dehydrogenase family. As to quaternary structure, homodimer.

It carries out the reaction D-glucose 6-phosphate + NAD(+) = 6-phospho-D-glucono-1,5-lactone + NADH + H(+). The catalysed reaction is D-glucose 6-phosphate + NADP(+) = 6-phospho-D-glucono-1,5-lactone + NADPH + H(+). It participates in carbohydrate degradation; pentose phosphate pathway; D-ribulose 5-phosphate from D-glucose 6-phosphate (oxidative stage): step 1/3. Catalyzes the oxidation of glucose 6-phosphate to 6-phosphogluconolactone. Can utilize either NADP(+) or NAD(+). This Leuconostoc mesenteroides protein is Glucose-6-phosphate 1-dehydrogenase.